A 178-amino-acid chain; its full sequence is ATP synthase subunit delta (178 aa).

The protein belongs to the ATPase delta chain family. As to quaternary structure, F-type ATPases have 2 components, F(1) - the catalytic core - and F(0) - the membrane proton channel. F(1) has five subunits: alpha(3), beta(3), gamma(1), delta(1), epsilon(1). F(0) has three main subunits: a(1), b(2) and c(10-14). The alpha and beta chains form an alternating ring which encloses part of the gamma chain. F(1) is attached to F(0) by a central stalk formed by the gamma and epsilon chains, while a peripheral stalk is formed by the delta and b chains.

The protein localises to the cell inner membrane. Functionally, f(1)F(0) ATP synthase produces ATP from ADP in the presence of a proton or sodium gradient. F-type ATPases consist of two structural domains, F(1) containing the extramembraneous catalytic core and F(0) containing the membrane proton channel, linked together by a central stalk and a peripheral stalk. During catalysis, ATP synthesis in the catalytic domain of F(1) is coupled via a rotary mechanism of the central stalk subunits to proton translocation. In terms of biological role, this protein is part of the stalk that links CF(0) to CF(1). It either transmits conformational changes from CF(0) to CF(1) or is implicated in proton conduction. In Thioalkalivibrio sulfidiphilus (strain HL-EbGR7), this protein is ATP synthase subunit delta.